Reading from the N-terminus, the 482-residue chain is Histone deacetylase 1 (482 aa).

The tract at residues 9–321 is histone deacetylase; the sequence is RKVCYYYDGD…WTYETAVALD (313 aa). Positions 27 and 31 each coordinate 1D-myo-inositol 1,4,5,6-tetrakisphosphate. An N6-acetyllysine; alternate modification is found at Lys-74. A Glycyl lysine isopeptide (Lys-Gly) (interchain with G-Cter in SUMO2); alternate cross-link involves residue Lys-74. His-141 is an active-site residue. Residues Asp-176 and His-178 each contribute to the Zn(2+) site. N6-acetyllysine is present on Lys-220. Cys-261 is modified (S-nitrosocysteine). Asp-264 contacts Zn(2+). Arg-270 lines the 1D-myo-inositol 1,4,5,6-tetrakisphosphate pocket. S-nitrosocysteine is present on Cys-273. A compositionally biased stretch (acidic residues) spans 390–400; that stretch reads PEESGDEDEED. The interval 390–482 is disordered; sequence PEESGDEDEE…KGVKEEVKLA (93 aa). Phosphoserine occurs at positions 393, 406, 409, 421, and 423. Over residues 401–416 the composition is skewed to basic and acidic residues; sequence PDKRISICSSDKRIAC. Acidic residues predominate over residues 417–427; it reads EEEFSDSDEEG. Lys-432 is modified (N6-methylated lysine; by EHMT2). Residue Lys-438 forms a Glycyl lysine isopeptide (Lys-Gly) (interchain with G-Cter in SUMO2) linkage. Residues 443–482 show a composition bias toward basic and acidic residues; it reads VKTEDEKEKDPEEKKEVTEEEKTKEEKQEAKGVKEEVKLA. Residue Lys-444 forms a Glycyl lysine isopeptide (Lys-Gly) (interchain with G-Cter in SUMO2); alternate linkage. A Glycyl lysine isopeptide (Lys-Gly) (interchain with G-Cter in SUMO); alternate cross-link involves residue Lys-444. Residues Lys-456, Lys-457, and Lys-473 each participate in a glycyl lysine isopeptide (Lys-Gly) (interchain with G-Cter in SUMO2) cross-link. Residue Lys-476 forms a Glycyl lysine isopeptide (Lys-Gly) (interchain with G-Cter in SUMO2); alternate linkage. Lys-476 is covalently cross-linked (Glycyl lysine isopeptide (Lys-Gly) (interchain with G-Cter in SUMO); alternate). Lys-480 participates in a covalent cross-link: Glycyl lysine isopeptide (Lys-Gly) (interchain with G-Cter in SUMO2).

The protein belongs to the histone deacetylase family. HD type 1 subfamily. As to quaternary structure, part of the core histone deacetylase (HDAC) complex composed of HDAC1, HDAC2, RBBP4 and RBBP7, the core complex associates with SIN3, SAP18 and SAP30 to form the SIN3 HDAC complex. Component of the nucleosome remodeling and deacetylase (NuRD) repressor complex, composed of core proteins MTA1, MTA2, MTA3, RBBP4, RBBP7, HDAC1, HDAC2, MBD2, MBD3, and peripherally associated proteins CDK2AP1, CDK2AP2, GATAD2A, GATAD2B, CHD3, CHD4 and CHD5. The exact stoichiometry of the NuRD complex is unknown, and some subunits such as MBD2 and MBD3, GATAD2A and GATAD2B, and CHD3, CHD4 and CHD5 define mutually exclusive NuRD complexes. Component of a BHC histone deacetylase complex that contains HDAC1, HDAC2, HMG20B/BRAF35, KDM1A, RCOR1/CoREST and PHF21A/BHC80. The BHC complex may also contain ZMYM2, ZNF217, ZMYM3, GSE1 and GTF2I. Component of a mSin3A corepressor complex that contains SIN3A, SAP130, SUDS3/SAP45, ARID4B/SAP180, HDAC1 and HDAC2. Found in a trimeric complex with APBB1 and TSHZ3; the interaction between HDAC1 and APBB1 is mediated by TSHZ3. Forms a complex comprising APPL1, RUVBL2, APPL2, CTNNB1 and HDAC2. Component of a RCOR/GFI/KDM1A/HDAC complex. Part of a complex composed of TRIM28, HDAC1, HDAC2 and EHMT2. Part of a complex containing at least CDYL, MIER1, MIER2, HDAC1 and HDAC2. The large PER complex involved in the histone deacetylation is composed of at least HDAC1, PER2, SFPQ and SIN3A. Associates with the 9-1-1 complex; interacts with HUS1. Found in a complex with DNMT3A and HDAC7. Found in a complex with YY1, SIN3A and GON4L. Identified in a histone deacetylase complex that contains DNTTIP1, HDAC1 and MIDEAS; this complex assembles into a tetramer that contains four copies of each protein chain. Found in a complex composed of at least SINHCAF, SIN3A, HDAC1, SAP30, RBBP4, OGT and TET1. Component of the SIN3B complex, which includes SIN3B, HDAC1, PHF12 and MORF4L1. Interacts with GFI1; the interaction is direct. Interacts directly with GFI1B. Interacts with TSHZ3 (via N-terminus); the interaction is direct. Interacts with APEX1; the interaction is not dependent on the acetylated status of APEX1. Interacts with BANP. Interacts with BAZ2A/TIP5. Interacts with BCL6. Interacts with BCOR. Interacts with BHLHE40/DEC1. Interacts with BRCC3; this interaction is enhanced in the presence of PWWP2B. Interacts with BRMS1. Interacts with BRMS1L. Interacts with C10orf90/FATS (via its N-terminal); the interaction prevents binding of HDAC1 to CDKN1A/p21 and facilitates the acetylation and stabilization of CDKN1A/p21. Interacts with CBFA2T3. Interacts with CCAR2. Interacts with CDK2AP1. Interacts with CHD3. Interacts with CHD4. Interacts with CHFR. Interacts with CIART. Interacts with CDKN1A/p21. Interacts with CDK5 complexed to CDK5R1 (p25). Interacts with CRY1. Interacts with DAXX. Interacts with DDIT3/CHOP. Interacts with DDX5. Interacts with DHX36; this interaction occurs in a RNA-dependent manner. Interacts with DNMT1. Interacts with DNTTIP1. Interacts with E4F1. Interacts with EP300. Interacts with ERCC6. Interacts with GATAD2A. Interacts with HCFC1. Interacts with HDAC9. Interacts with HUS1. Interacts with INSM1. Interacts with KDM4A. Interacts with KDM5A; this interaction impairs histone deacetylation. Interacts with KDM5B. Interacts with KLF1. Interacts with MBD3L2. Interacts with MIER1. Interacts with NFE4. Interacts with NR4A2/NURR1. Interacts with NR1D2 (via C-terminus). Interacts with NRIP1. Interacts with NSD2. Interacts with PACS2. Interacts with PHB2. Interacts with PPHLN1. Interacts with PRDM6. Interacts with PRDM16. Interacts with PWWP2A in a MTA1-dependent manner. Interacts with PWWP2B. Interacts with RB1. Interacts with RERE. Interacts with SANBR (via the BTB domain). Interacts with SAMSN1. Interacts with SAP30L. Interacts with SETDB1. Interacts with SIN3A. Interacts with SMAD3. Interacts with SMAD4; positively regulated by ZBTB7A. Interacts with SMARCAD1. Interacts with SMARCA4/BRG1. Interacts with SMYD2. Interacts with SMYD4 (via MYND-type zinc finger). Interacts with SP1; the interaction deacetylates SP1 and regulates its transcriptional activity. Interacts with SP3; the interaction deacetylates SP3 and regulates its transcriptional activity. In vitro, C(18) ceramides increase this interaction and the subsequent SP3 deacetylation and SP3-mediated repression of the TERT promoter. Interacts with SPEN/MINT. Interacts with SPHK2. Interacts with SUV39H1. Interacts with TGIF. Interacts with TGIF2. Interacts with TRAF6. Interacts with TRIM28; the interaction recruits HDAC1 to E2F1 and inhibits its acetylation. Interacts with TSC22D3 isoform 1; this interaction affects HDAC1 activity on MYOG promoter and thus inhibits MYOD1 transcriptional activity. Interacts with UHRF1. Interacts with UHRF2. Interacts with ZBTB7A. Interacts with ZMYND8. Interacts with ZMYND15. Interacts with ZNF431. Interacts with ZNF516; this interaction is enhanced in the presence of PWWP2B. Interacts with ZNF541. Interacts with ZNF638. Interacts with ZNHIT1. Interacts with the non-histone region of MACROH2A1. Identified in a complex with HDAC2, KCTD19, DNTTIP1 and ZNF541. Interacts with MSX3. Interacts with VRK1. It depends on Zn(2+) as a cofactor. Sumoylated on Lys-444 and Lys-476; which promotes enzymatic activity. Desumoylated by SENP1. Post-translationally, phosphorylation on Ser-421 and Ser-423 promotes enzymatic activity and interactions with NuRD and SIN3 complexes. Phosphorylated by CDK5. In terms of processing, ubiquitinated by CHFR and KCTD11, leading to its degradation by the proteasome.

The protein localises to the nucleus. The enzyme catalyses N(6)-acetyl-L-lysyl-[histone] + H2O = L-lysyl-[histone] + acetate. It catalyses the reaction N(6)-acetyl-L-lysyl-[protein] + H2O = L-lysyl-[protein] + acetate. It carries out the reaction N(6)-(2E)-butenoyl-L-lysyl-[protein] + H2O = (2E)-2-butenoate + L-lysyl-[protein]. The catalysed reaction is N(6)-[(S)-lactoyl]-L-lysyl-[protein] + H2O = (S)-lactate + L-lysyl-[protein]. With respect to regulation, inositol tetraphosphate (1D-myo-inositol 1,4,5,6-tetrakisphosphate) may act as an intermolecular glue between HDAC1 and N-Cor repressor complex components. In terms of biological role, histone deacetylase that catalyzes the deacetylation of lysine residues on the N-terminal part of the core histones (H2A, H2B, H3 and H4). Histone deacetylation gives a tag for epigenetic repression and plays an important role in transcriptional regulation, cell cycle progression and developmental events. Histone deacetylases act via the formation of large multiprotein complexes. Acts as a component of the histone deacetylase NuRD complex which participates in the remodeling of chromatin. As part of the SIN3B complex is recruited downstream of the constitutively active genes transcriptional start sites through interaction with histones and mitigates histone acetylation and RNA polymerase II progression within transcribed regions contributing to the regulation of transcription. Also functions as a deacetylase for non-histone targets, such as NR1D2, RELA, SP1, SP3, STAT3 and TSHZ3. Deacetylates SP proteins, SP1 and SP3, and regulates their function. Component of the BRG1-RB1-HDAC1 complex, which negatively regulates the CREST-mediated transcription in resting neurons. Upon calcium stimulation, HDAC1 is released from the complex and CREBBP is recruited, which facilitates transcriptional activation. Deacetylates TSHZ3 and regulates its transcriptional repressor activity. Deacetylates 'Lys-310' in RELA and thereby inhibits the transcriptional activity of NF-kappa-B. Deacetylates NR1D2 and abrogates the effect of KAT5-mediated relieving of NR1D2 transcription repression activity. Component of a RCOR/GFI/KDM1A/HDAC complex that suppresses, via histone deacetylase (HDAC) recruitment, a number of genes implicated in multilineage blood cell development. Involved in CIART-mediated transcriptional repression of the circadian transcriptional activator: CLOCK-BMAL1 heterodimer. Required for the transcriptional repression of circadian target genes, such as PER1, mediated by the large PER complex or CRY1 through histone deacetylation. In addition to protein deacetylase activity, also has protein-lysine deacylase activity: acts as a protein decrotonylase and delactylase by mediating decrotonylation ((2E)-butenoyl) and delactylation (lactoyl) of histones, respectively. In Bos taurus (Bovine), this protein is Histone deacetylase 1 (HDAC1).